The following is a 181-amino-acid chain: Inner membrane-spanning protein YciB (181 aa).

The next 5 helical transmembrane spans lie at 10–30, 50–70, 80–100, 118–138, and 148–168; these read LVIF…GALI, MHLI…VFHD, IIYS…KSIL, VTWY…YVAF, and FKVF…VFYL.

The protein belongs to the YciB family.

The protein resides in the cell inner membrane. Plays a role in cell envelope biogenesis, maintenance of cell envelope integrity and membrane homeostasis. This is Inner membrane-spanning protein YciB from Shewanella baltica (strain OS223).